A 364-amino-acid chain; its full sequence is Mannose-1-phosphate guanyltransferase (364 aa).

This sequence belongs to the transferase hexapeptide repeat family.

It is found in the cytoplasm. The catalysed reaction is alpha-D-mannose 1-phosphate + GTP + H(+) = GDP-alpha-D-mannose + diphosphate. It participates in nucleotide-sugar biosynthesis; GDP-alpha-D-mannose biosynthesis; GDP-alpha-D-mannose from alpha-D-mannose 1-phosphate (GTP route): step 1/1. In terms of biological role, involved in cell wall synthesis where it is required for glycosylation. Involved in cell cycle progression through cell-size checkpoint. The sequence is that of Mannose-1-phosphate guanyltransferase (mpg-1) from Neurospora crassa (strain ATCC 24698 / 74-OR23-1A / CBS 708.71 / DSM 1257 / FGSC 987).